A 468-amino-acid chain; its full sequence is Argininosuccinate lyase (468 aa).

Belongs to the lyase 1 family. Argininosuccinate lyase subfamily.

Its subcellular location is the cytoplasm. It carries out the reaction 2-(N(omega)-L-arginino)succinate = fumarate + L-arginine. It participates in amino-acid biosynthesis; L-arginine biosynthesis; L-arginine from L-ornithine and carbamoyl phosphate: step 3/3. This Sphingopyxis alaskensis (strain DSM 13593 / LMG 18877 / RB2256) (Sphingomonas alaskensis) protein is Argininosuccinate lyase.